We begin with the raw amino-acid sequence, 171 residues long: Small ribosomal subunit protein uS4 (171 aa).

The S4 RNA-binding domain occupies 104–168 (RRLQTIVYKK…SPFKERAEEA (65 aa)).

The protein belongs to the universal ribosomal protein uS4 family. Part of the 30S ribosomal subunit. Contacts protein S5. The interaction surface between S4 and S5 is involved in control of translational fidelity.

One of the primary rRNA binding proteins, it binds directly to 16S rRNA where it nucleates assembly of the body of the 30S subunit. Its function is as follows. With S5 and S12 plays an important role in translational accuracy. This is Small ribosomal subunit protein uS4 from Aeropyrum pernix (strain ATCC 700893 / DSM 11879 / JCM 9820 / NBRC 100138 / K1).